The following is a 322-amino-acid chain: ATP-dependent 6-phosphofructokinase 1 (322 aa).

Residue Gly11 participates in ATP binding. 21 to 25 (RAVVR) provides a ligand contact to ADP. Residues 72 to 73 (RS) and 102 to 105 (GDGT) contribute to the ATP site. Residue Asp103 participates in Mg(2+) binding. Substrate is bound at residue 126–128 (TID). Asp128 (proton acceptor) is an active-site residue. Residue Arg155 coordinates ADP. Substrate contacts are provided by residues Arg163 and 170 to 172 (MGR). ADP-binding positions include 186 to 188 (GAE), Arg212, and 214 to 216 (KKS). Substrate is bound by residues Glu223, Arg246, and 252 to 255 (HIQR).

It belongs to the phosphofructokinase type A (PFKA) family. ATP-dependent PFK group I subfamily. Prokaryotic clade 'B1' sub-subfamily. As to quaternary structure, homotetramer. Requires Mg(2+) as cofactor.

It is found in the cytoplasm. The enzyme catalyses beta-D-fructose 6-phosphate + ATP = beta-D-fructose 1,6-bisphosphate + ADP + H(+). Its pathway is carbohydrate degradation; glycolysis; D-glyceraldehyde 3-phosphate and glycerone phosphate from D-glucose: step 3/4. Its activity is regulated as follows. Allosterically activated by ADP and other diphosphonucleosides. Allosterically inhibited by phosphoenolpyruvate which induces the dissociation of the active tetramer into an inactive two-subunit forms. Catalyzes the phosphorylation of D-fructose 6-phosphate to fructose 1,6-bisphosphate by ATP, the first committing step of glycolysis. This chain is ATP-dependent 6-phosphofructokinase 1, found in Thermus thermophilus (strain ATCC 27634 / DSM 579 / HB8).